Reading from the N-terminus, the 1993-residue chain is Otoferlin (1993 aa).

A C2 1 domain is found at 1–98 (MALIVHLKTV…VEENRVEVSD (98 aa)). Residues 1 to 1959 (MALIVHLKTV…IKYLICTRYK (1959 aa)) lie on the Cytoplasmic side of the membrane. The segment at 127–212 (PWDDGDFLGD…KEEPQRQDEP (86 aa)) is disordered. A compositionally biased stretch (acidic residues) spans 129–145 (DDGDFLGDESLQEEEKD). Basic and acidic residues-rich tracts occupy residues 163 to 186 (PGEK…EHKA) and 202 to 211 (HKEEPQRQDE). 2 consecutive C2 domains span residues 251-372 (KRSK…HKWA) and 415-546 (IEGN…FLPT). The disordered stretch occupies residues 654–708 (NYGNEVDGTSRPQRPRPRKEPGDEEEVDLIQNSSDDEGDEAGDLASVSSTPPMRP). Positions 675–695 (GDEEEVDLIQNSSDDEGDEAG) are enriched in acidic residues. Positions 807-836 (RERLKSCMRELESMGQQAKSLRAQVKRHTV) form a coiled coil. 2 C2 domains span residues 959-1084 (LHSF…PPRF) and 1131-1257 (RGPI…ANWN). Residues D991, D997, D1053, D1055, and D1061 each contribute to the Ca(2+) site. Disordered stretches follow at residues 1294-1318 (AEDE…EEPD) and 1339-1398 (LRQH…EKKK). The span at 1348 to 1357 (DLEEKEEMDS) shows a compositional bias: acidic residues. A compositionally biased stretch (basic and acidic residues) spans 1366–1379 (KNKEKSRAAKEEKK). C2 domains follow at residues 1460–1589 (LPED…ATCG) and 1710–1861 (DMPA…KQCT). 8 residues coordinate Ca(2+): D1504, D1510, D1559, D1561, D1567, D1832, S1835, and D1838. The helical transmembrane segment at 1960-1980 (WLIIKIVLALLGLLMLALFLY) threads the bilayer. Topologically, residues 1981–1993 (SLPGYMVKKLLGA) are extracellular.

It belongs to the ferlin family. Interacts with SNAP25; the interaction is direct. Interacts with STX1; the interaction is direct. Interacts with RAB8B. It depends on Ca(2+) as a cofactor. Isoform 1 is expressed in the cochlea and brain. Expressed in cerebellum (Purkinje cells), hippocampus (granule cells of the dentate gyrus and in pyramidal cells of the CA1-CA3 region) and cortex (stellate and pyramidal cells). Expressed in hair cells of vestibular organs such as the saccule, utricle and crista ampullari. Expressed in the cochlear inner and outer cells (IHCs and OHCs) (at protein level). Expressed in brain: brainstem, cerebellum (granules cells and Purkinje cell layer), cortex (layers IV and V), inferior colliculus, superior colliculus and hippocampus (granule cells of the dentate gyrus and in pyramidal cells of the CA1-CA3 region).

The protein localises to the cytoplasmic vesicle. It localises to the secretory vesicle. It is found in the synaptic vesicle membrane. Its subcellular location is the basolateral cell membrane. The protein resides in the endoplasmic reticulum membrane. The protein localises to the golgi apparatus membrane. It localises to the presynaptic cell membrane. It is found in the cell membrane. In terms of biological role, key calcium ion sensor involved in the Ca(2+)-triggered synaptic vesicle-plasma membrane fusion and in the control of neurotransmitter release at these output synapses. Interacts in a calcium-dependent manner to the presynaptic SNARE proteins at ribbon synapses of cochlear inner hair cells (IHCs) to trigger exocytosis of neurotransmitter. Also essential to synaptic exocytosis in immature outer hair cells (OHCs). May also play a role within the recycling of endosomes. In Rattus norvegicus (Rat), this protein is Otoferlin (Otof).